The chain runs to 207 residues: NADH-quinone oxidoreductase subunit A (207 aa).

3 consecutive transmembrane segments (helical) span residues Leu6–Pro26, Leu62–Val82, and Ala87–Val107.

It belongs to the complex I subunit 3 family. In terms of assembly, NDH-1 is composed of 14 different subunits. Subunits NuoA, H, J, K, L, M, N constitute the membrane sector of the complex.

It is found in the cell inner membrane. It catalyses the reaction a quinone + NADH + 5 H(+)(in) = a quinol + NAD(+) + 4 H(+)(out). Functionally, NDH-1 shuttles electrons from NADH, via FMN and iron-sulfur (Fe-S) centers, to quinones in the respiratory chain. The immediate electron acceptor for the enzyme in this species is believed to be ubiquinone. Couples the redox reaction to proton translocation (for every two electrons transferred, four hydrogen ions are translocated across the cytoplasmic membrane), and thus conserves the redox energy in a proton gradient. In Psychrobacter cryohalolentis (strain ATCC BAA-1226 / DSM 17306 / VKM B-2378 / K5), this protein is NADH-quinone oxidoreductase subunit A.